Here is a 370-residue protein sequence, read N- to C-terminus: uncharacterized protein (370 aa).

Positions 62 to 293 (ATVALVGFPS…LKERMWRALG (232 aa)) constitute an OBG-type G domain. Residues 68–75 (GFPSVGKS), 114–118 (DVPGL), and 243–246 (NKVD) contribute to the GTP site. Residues 293–368 (GLIRIYMDKP…EDEDVLRVVA (76 aa)) form the TGS domain.

This sequence belongs to the TRAFAC class OBG-HflX-like GTPase superfamily. OBG GTPase family.

This is an uncharacterized protein from Halobacterium salinarum (strain ATCC 700922 / JCM 11081 / NRC-1) (Halobacterium halobium).